A 230-amino-acid polypeptide reads, in one-letter code: AA9 family lytic polysaccharide monooxygenase H (230 aa).

Positions M1–A17 are cleaved as a signal peptide. Cu(2+)-binding residues include H18 and H89. C59 and C178 are disulfide-bonded. O2-binding residues include H164 and Q173. A Cu(2+)-binding site is contributed by Y175.

This sequence belongs to the polysaccharide monooxygenase AA9 family. It depends on Cu(2+) as a cofactor.

The protein resides in the secreted. It carries out the reaction [(1-&gt;4)-beta-D-glucosyl]n+m + reduced acceptor + O2 = 4-dehydro-beta-D-glucosyl-[(1-&gt;4)-beta-D-glucosyl]n-1 + [(1-&gt;4)-beta-D-glucosyl]m + acceptor + H2O.. Lytic polysaccharide monooxygenase (LPMO) that depolymerizes crystalline and amorphous polysaccharides via the oxidation of scissile alpha- or beta-(1-4)-glycosidic bonds, yielding primarly C1 oxidation products. Catalysis by LPMOs requires the reduction of the active-site copper from Cu(II) to Cu(I) by a reducing agent and H(2)O(2) or O(2) as a cosubstrate. Active on hemicelluloses, including xylan, glucomannan, and xyloglucan. Preferentially cleaves residual xylan in phosphoric acid-swollen cellulose (PASC). Moreover, when exposed to cellulose-xylan blends, shows a preference for xylan and for releasing oxidized xylooligosaccharides. Has no activity on ivory nut mannan (INM), a linear beta-1,4-linked mannan without substitutions. The polypeptide is AA9 family lytic polysaccharide monooxygenase H (Malbranchea cinnamomea (Thermophilic fungus)).